We begin with the raw amino-acid sequence, 541 residues long: Protein MGF 505-10R (541 aa).

Belongs to the asfivirus MGF 505 family.

Its function is as follows. Plays a role in virus cell tropism, and may be required for efficient virus replication in macrophages. The chain is Protein MGF 505-10R from Ornithodoros (relapsing fever ticks).